Consider the following 277-residue polypeptide: Undecaprenyl-diphosphatase (277 aa).

6 helical membrane passes run 53–73 (LGAILAVVWEFREKVFGVILG), 85–105 (VNLLIAFLPAVVLGVAFADLI), 108–128 (WLFNPITVASALVVGGLVMLW), 183–203 (AATEFSFFLAMPTMVGAAAYS), 215–235 (GDLPVFALGFVVSFIFAMLAV), and 250–270 (FAWYRIGFGLLILLTWQLGVV).

It belongs to the UppP family.

The protein localises to the cell inner membrane. It catalyses the reaction di-trans,octa-cis-undecaprenyl diphosphate + H2O = di-trans,octa-cis-undecaprenyl phosphate + phosphate + H(+). Its function is as follows. Catalyzes the dephosphorylation of undecaprenyl diphosphate (UPP). Confers resistance to bacitracin. This is Undecaprenyl-diphosphatase from Azotobacter vinelandii (strain DJ / ATCC BAA-1303).